Reading from the N-terminus, the 823-residue chain is Kinesin-like protein KIN-7N (823 aa).

Residues 3 to 325 (KICVAVRVRP…LQFASRAKRI (323 aa)) enclose the Kinesin motor domain. 83-90 (GQTSSGKT) provides a ligand contact to ATP. 3 coiled-coil regions span residues 341-414 (LKRQ…NLNN), 527-557 (RENH…FNEQ), and 696-786 (EKKL…MEEE).

The protein belongs to the TRAFAC class myosin-kinesin ATPase superfamily. Kinesin family. KIN-7 subfamily.

The protein is Kinesin-like protein KIN-7N of Arabidopsis thaliana (Mouse-ear cress).